The following is a 288-amino-acid chain: ATP synthase gamma chain (288 aa).

This sequence belongs to the ATPase gamma chain family. As to quaternary structure, F-type ATPases have 2 components, CF(1) - the catalytic core - and CF(0) - the membrane proton channel. CF(1) has five subunits: alpha(3), beta(3), gamma(1), delta(1), epsilon(1). CF(0) has three main subunits: a, b and c.

The protein resides in the cell membrane. Functionally, produces ATP from ADP in the presence of a proton gradient across the membrane. The gamma chain is believed to be important in regulating ATPase activity and the flow of protons through the CF(0) complex. This is ATP synthase gamma chain from Symbiobacterium thermophilum (strain DSM 24528 / JCM 14929 / IAM 14863 / T).